The sequence spans 143 residues: MLSPRRTKFRKQHRGRMKGVATRGNQIAFGRFALQAMEASWITSRQIEAGRRAMTRYARRGGKLWIKIFPDKPITMRPAETRMGSGKGAPEYWVAVVKPGRILYEMSGISETIARAAMRIAAYKMPIKTRFIVANLSKNPTND.

This sequence belongs to the universal ribosomal protein uL16 family. In terms of assembly, part of the 50S ribosomal subunit.

The protein localises to the plastid. It localises to the chloroplast. The sequence is that of Large ribosomal subunit protein uL16c from Spirogyra maxima (Green alga).